The sequence spans 388 residues: D-alanyl-D-alanine carboxypeptidase DacD (388 aa).

The N-terminal stretch at 1 to 21 is a signal peptide; the sequence is MKRRLIIAASLFVFNLSSGFA. Serine 63 serves as the catalytic Acyl-ester intermediate. The active-site Proton acceptor is the lysine 66. The active site involves serine 129. Lysine 232 contributes to the substrate binding site.

The protein belongs to the peptidase S11 family.

It localises to the cell inner membrane. It carries out the reaction Preferential cleavage: (Ac)2-L-Lys-D-Ala-|-D-Ala. Also transpeptidation of peptidyl-alanyl moieties that are N-acyl substituents of D-alanine.. It functions in the pathway cell wall biogenesis; peptidoglycan biosynthesis. Removes C-terminal D-alanyl residues from sugar-peptide cell wall precursors. This Escherichia coli (strain K12) protein is D-alanyl-D-alanine carboxypeptidase DacD (dacD).